The following is a 169-amino-acid chain: S-ribosylhomocysteine lyase (169 aa).

The Fe cation site is built by H54, H58, and C128.

The protein belongs to the LuxS family. Homodimer. Requires Fe cation as cofactor.

The catalysed reaction is S-(5-deoxy-D-ribos-5-yl)-L-homocysteine = (S)-4,5-dihydroxypentane-2,3-dione + L-homocysteine. In terms of biological role, involved in the synthesis of autoinducer 2 (AI-2) which is secreted by bacteria and is used to communicate both the cell density and the metabolic potential of the environment. The regulation of gene expression in response to changes in cell density is called quorum sensing. Catalyzes the transformation of S-ribosylhomocysteine (RHC) to homocysteine (HC) and 4,5-dihydroxy-2,3-pentadione (DPD). The polypeptide is S-ribosylhomocysteine lyase (Shewanella halifaxensis (strain HAW-EB4)).